The sequence spans 102 residues: Small ribosomal subunit protein uS10 (102 aa).

Belongs to the universal ribosomal protein uS10 family. As to quaternary structure, part of the 30S ribosomal subunit.

Its function is as follows. Involved in the binding of tRNA to the ribosomes. The polypeptide is Small ribosomal subunit protein uS10 (Sulfurisphaera tokodaii (strain DSM 16993 / JCM 10545 / NBRC 100140 / 7) (Sulfolobus tokodaii)).